A 256-amino-acid chain; its full sequence is Small ribosomal subunit protein eS1 (256 aa).

N-acetylalanine; partial is present on Ala2.

It belongs to the eukaryotic ribosomal protein eS1 family. In terms of assembly, component of the small ribosomal subunit. Mature ribosomes consist of a small (40S) and a large (60S) subunit. The 40S subunit contains about 33 different proteins and 1 molecule of RNA (18S). The 60S subunit contains about 49 different proteins and 3 molecules of RNA (25S, 5.8S and 5S).

The protein resides in the cytoplasm. This is Small ribosomal subunit protein eS1 from Laccaria bicolor (strain S238N-H82 / ATCC MYA-4686) (Bicoloured deceiver).